The chain runs to 252 residues: 14-3-3 protein homolog 1 (252 aa).

The protein belongs to the 14-3-3 family.

This is 14-3-3 protein homolog 1 from Schistosoma mansoni (Blood fluke).